A 194-amino-acid polypeptide reads, in one-letter code: Cysteine and glycine-rich protein 2 (194 aa).

The region spanning 10–61 (CGACGRTVYHAEEVQCDGRSFHRCCFLCMVCRKNLDSTTVAIHDAEVYCKSC) is the LIM zinc-binding 1 domain. The Nuclear localization signal signature appears at 64–69 (KKYGPK). Residues 120–171 (CSRCGDSVYAAEKVIGAGKPWHKNCFRCAKCGKSLESTTLTEKEGEIYCKGC) enclose the LIM zinc-binding 2 domain.

It is found in the nucleus. Functionally, totally down-regulated in transformed cells. May therefore take part in the control of cell growth and differentiation. The polypeptide is Cysteine and glycine-rich protein 2 (CSRP2) (Gallus gallus (Chicken)).